We begin with the raw amino-acid sequence, 451 residues long: L-seryl-tRNA(Sec) selenium transferase (451 aa).

Lys-286 bears the N6-(pyridoxal phosphate)lysine mark.

This sequence belongs to the SelA family. Pyridoxal 5'-phosphate is required as a cofactor.

The protein localises to the cytoplasm. It carries out the reaction L-seryl-tRNA(Sec) + selenophosphate + H(+) = L-selenocysteinyl-tRNA(Sec) + phosphate. It participates in aminoacyl-tRNA biosynthesis; selenocysteinyl-tRNA(Sec) biosynthesis; selenocysteinyl-tRNA(Sec) from L-seryl-tRNA(Sec) (bacterial route): step 1/1. Functionally, converts seryl-tRNA(Sec) to selenocysteinyl-tRNA(Sec) required for selenoprotein biosynthesis. This Aliarcobacter butzleri (strain RM4018) (Arcobacter butzleri) protein is L-seryl-tRNA(Sec) selenium transferase.